A 458-amino-acid polypeptide reads, in one-letter code: Forkhead box protein J1-A (458 aa).

The span at 68–78 (TGQHTSPSSHS) shows a compositional bias: polar residues. Residues 68-99 (TGQHTSPSSHSHLMGSDAPSSPLAGDPASIGM) are disordered. The segment at residues 142-236 (KPPYSYATLI…LNGAYKKRRL (95 aa)) is a DNA-binding region (fork-head). The span at 305–321 (TNKRKQPYNHRTGKTPR) shows a compositional bias: basic residues. Residues 305–324 (TNKRKQPYNHRTGKTPRRSS) form a disordered region.

Belongs to the FOXJ1 family. As to expression, expressed in floor plate, dorsal forerunner cells, Kupffers vesicle, the floor plate, pronephric ducts and kidney.

The protein localises to the nucleus. In terms of biological role, key transcription factor required for motile ciliogenesis. Activates genes essential for motile cilia formation and function. Its activity is sufficient for ectopic development of cilia that resemble motile cilia. The protein is Forkhead box protein J1-A of Danio rerio (Zebrafish).